Consider the following 234-residue polypeptide: uncharacterized protein (234 aa).

Transmembrane regions (helical) follow at residues 20–40 and 176–196; these read LILL…FKVI and VMAF…LHFL.

It belongs to the CpsC/CapA family.

The protein localises to the cell membrane. This is an uncharacterized protein from Bacillus subtilis (strain 168).